The chain runs to 1132 residues: Cytospin-A (1132 aa).

Residues 1 to 166 form a disordered region; it reads MKKAGRPVGN…SKSDGQLSDK (166 aa). 2 stretches are compositionally biased toward low complexity: residues 73–109 and 119–129; these read STHSTSCGTNTNNPDTKTKTTSGPSGKRTTSMTSKES and SRNSSSKKQSS. A compositionally biased stretch (basic and acidic residues) spans 150–159; the sequence is SESRMSKSKS. Positions 226–268 form a coiled coil; sequence DVESTLLLLQEQNQAIRGELNLLKNENRMLKDRLNALGFSLEQ. Residues 301–381 form a disordered region; the sequence is ASSVEGSAPG…RKGSSGNTSE (81 aa). The span at 333–343 shows a compositional bias: polar residues; sequence SEVYQAVTSSD. Residues 348–377 show a composition bias toward low complexity; it reads APSGCGSSSSSESEGGPPACRSSSRKGSSG. 2 coiled-coil regions span residues 385–440 and 478–798; these read ACLT…MDSL and RYME…RGRV. Disordered stretches follow at residues 869–895 and 939–1016; these read TSTTPTAPLPRTPLSPSPMKTPPAAAV and SRPA…RKDP. The segment covering 875-889 has biased composition (pro residues); that stretch reads APLPRTPLSPSPMKT. Positions 946–961 are enriched in polar residues; the sequence is QRVSNMDTSKTITVSR. A compositionally biased stretch (basic and acidic residues) spans 962-972; the sequence is RSSEEPKRDIS. Low complexity predominate over residues 979–1000; that stretch reads ASSLISMSSAAALSSSSSPTAS. Positions 1026–1131 constitute a Calponin-homology (CH) domain; the sequence is GSKRNALLRW…YVTSIYKYFE (106 aa).

It belongs to the cytospin-A family. As to quaternary structure, may interact with both microtubules and actin cytoskeleton.

It localises to the cytoplasm. The protein localises to the cytoskeleton. It is found in the spindle. Its subcellular location is the cell junction. The protein resides in the gap junction. In terms of biological role, involved in cytokinesis and spindle organization. May play a role in actin cytoskeleton organization and microtubule stabilization and hence required for proper cell adhesion and migration. In Danio rerio (Zebrafish), this protein is Cytospin-A (specc1la).